Here is a 96-residue protein sequence, read N- to C-terminus: Small ribosomal subunit protein bS6 (96 aa).

This sequence belongs to the bacterial ribosomal protein bS6 family.

Functionally, binds together with bS18 to 16S ribosomal RNA. In Streptococcus sanguinis (strain SK36), this protein is Small ribosomal subunit protein bS6.